The sequence spans 227 residues: Cytochrome c oxidase subunit 2 (227 aa).

Residues 1–14 (MAYPFQLGLQDATS) are Mitochondrial intermembrane-facing. The helical transmembrane segment at 15 to 45 (PIMEELTNFHDHTLMIVFLISSLVLYIISLM) threads the bilayer. Topologically, residues 46–59 (LTTKLTHTSTMDAQ) are mitochondrial matrix. A helical membrane pass occupies residues 60 to 87 (EVETIWTILPAAILVLIALPSLRILYMM). At 88–227 (DEINNPALTV…YFENWSASMI (140 aa)) the chain is on the mitochondrial intermembrane side. Cu cation-binding residues include histidine 161, cysteine 196, glutamate 198, cysteine 200, histidine 204, and methionine 207. A Mg(2+)-binding site is contributed by glutamate 198. Tyrosine 218 is subject to Phosphotyrosine.

The protein belongs to the cytochrome c oxidase subunit 2 family. Component of the cytochrome c oxidase (complex IV, CIV), a multisubunit enzyme composed of 14 subunits. The complex is composed of a catalytic core of 3 subunits MT-CO1, MT-CO2 and MT-CO3, encoded in the mitochondrial DNA, and 11 supernumerary subunits COX4I, COX5A, COX5B, COX6A, COX6B, COX6C, COX7A, COX7B, COX7C, COX8 and NDUFA4, which are encoded in the nuclear genome. The complex exists as a monomer or a dimer and forms supercomplexes (SCs) in the inner mitochondrial membrane with NADH-ubiquinone oxidoreductase (complex I, CI) and ubiquinol-cytochrome c oxidoreductase (cytochrome b-c1 complex, complex III, CIII), resulting in different assemblies (supercomplex SCI(1)III(2)IV(1) and megacomplex MCI(2)III(2)IV(2)). Found in a complex with TMEM177, COA6, COX18, COX20, SCO1 and SCO2. Interacts with TMEM177 in a COX20-dependent manner. Interacts with COX20. Interacts with COX16. The cofactor is Cu cation.

The protein resides in the mitochondrion inner membrane. The enzyme catalyses 4 Fe(II)-[cytochrome c] + O2 + 8 H(+)(in) = 4 Fe(III)-[cytochrome c] + 2 H2O + 4 H(+)(out). Functionally, component of the cytochrome c oxidase, the last enzyme in the mitochondrial electron transport chain which drives oxidative phosphorylation. The respiratory chain contains 3 multisubunit complexes succinate dehydrogenase (complex II, CII), ubiquinol-cytochrome c oxidoreductase (cytochrome b-c1 complex, complex III, CIII) and cytochrome c oxidase (complex IV, CIV), that cooperate to transfer electrons derived from NADH and succinate to molecular oxygen, creating an electrochemical gradient over the inner membrane that drives transmembrane transport and the ATP synthase. Cytochrome c oxidase is the component of the respiratory chain that catalyzes the reduction of oxygen to water. Electrons originating from reduced cytochrome c in the intermembrane space (IMS) are transferred via the dinuclear copper A center (CU(A)) of subunit 2 and heme A of subunit 1 to the active site in subunit 1, a binuclear center (BNC) formed by heme A3 and copper B (CU(B)). The BNC reduces molecular oxygen to 2 water molecules using 4 electrons from cytochrome c in the IMS and 4 protons from the mitochondrial matrix. This chain is Cytochrome c oxidase subunit 2 (MT-CO2), found in Rhabdomys pumilio (Four-striped grass mouse).